A 1279-amino-acid polypeptide reads, in one-letter code: Mediator of DNA damage checkpoint protein 1 (1279 aa).

The segment at 1 to 22 is disordered; sequence MENTQVIDWDAEEEEETEISSG. The segment at 1–150 is interaction with CHEK2; that stretch reads MENTQVIDWD…PRSLLTIEKT (150 aa). The segment at 2-222 is interaction with the MRN complex; sequence ENTQVIDWDA…SSPFGLGSDT (221 aa). The residue at position 4 (T4) is a Phosphothreonine. Residues 9–18 are compositionally biased toward acidic residues; it reads WDAEEEEETE. One can recognise an FHA domain in the interval 54–105; the sequence is NVVGRSPDCSVALPFPSISKQHAVIEISAWNKAPILQDCGSLNGTQIVKPPR. Residue T146 is modified to Phosphothreonine. Disordered regions lie at residues 156 to 394, 409 to 634, and 714 to 744; these read RSQN…EEVS, LWSG…KHAK, and ETSEPIDTHEAHGSQPSLPGEPPGHQHPVPT. 2 positions are modified to phosphoserine: S168 and S176. Residues 179–192 show a composition bias toward polar residues; it reads SVANGSRNTASPSA. 2 positions are modified to phosphoserine: S198 and S220. The residue at position 222 (T222) is a Phosphothreonine. The span at 264-277 shows a compositional bias: basic and acidic residues; sequence TKDKFKDTKMKEEA. Over residues 278 to 292 the composition is skewed to low complexity; it reads GSAGVPVGSVVEGSP. At S298 the chain carries Phosphoserine. T300 carries the phosphothreonine modification. S314 is modified (phosphoserine). Residue T316 is modified to Phosphothreonine. Residues S350 and S354 each carry the phosphoserine modification. T356 is modified (phosphothreonine). 2 positions are modified to phosphoserine: S372 and S380. Acidic residues predominate over residues 381-393; sequence DTDEEERGEEEEV. T382 bears the Phosphothreonine mark. 5 positions are modified to phosphoserine: S394, S411, S421, S434, and S438. The span at 421-435 shows a compositional bias: polar residues; the sequence is SQPQVLVERSQSASG. T440 is modified (phosphothreonine). S457 is modified (phosphoserine). Position 466 is a phosphothreonine (T466). S488, S489, S550, S587, and S589 each carry phosphoserine. A compositionally biased stretch (polar residues) spans 545–561; it reads QEGSSSPVADIRMSQQP. The span at 620-634 shows a compositional bias: basic and acidic residues; that stretch reads GREREAHVGGTKHAK. Phosphoserine occurs at positions 730 and 745. The residue at position 764 (K764) is an N6-acetyllysine. The disordered stretch occupies residues 772–1086; sequence QMMPDGKASG…TKPNQEAAAP (315 aa). S793, S801, and S824 each carry phosphoserine. Over residues 798 to 817 the composition is skewed to low complexity; the sequence is ASASPQSLLTSQSQKQSTPQ. Polar residues-rich tracts occupy residues 862 to 889, 901 to 929, and 942 to 956; these read TCPTNQPAASRPTSRPTRGRANRSSTRT, QPSTSTEQPGIPNLTSQVTEGRAHSTSVN, and PLTSAEQSVTSNLNP. T889 bears the Phosphothreonine mark. At T951 the chain carries Phosphothreonine. K991 is covalently cross-linked (Glycyl lysine isopeptide (Lys-Gly) (interchain with G-Cter in SUMO2)). Residues 994-1014 show a composition bias toward low complexity; the sequence is STPAEPEPQSSASQSSGASEA. S1008, S1009, S1012, and S1016 each carry phosphoserine. The span at 1032–1047 shows a compositional bias: basic and acidic residues; it reads VVKEEDPGEIQVKEEP. K1034 participates in a covalent cross-link: Glycyl lysine isopeptide (Lys-Gly) (interchain with G-Cter in SUMO1); alternate. Residue K1034 forms a Glycyl lysine isopeptide (Lys-Gly) (interchain with G-Cter in SUMO2); alternate linkage. A Phosphothreonine modification is found at T1054. BRCT domains are found at residues 1085–1163 and 1184–1275; these read APKV…DYLV and RERR…FVLS.

Homodimer. Interacts with H2AX, which requires phosphorylation of H2AX on 'Ser-139'. Interacts with the MRN complex, composed of MRE11, RAD50, and NBN. Interacts with CHEK2, which requires ATM-mediated phosphorylation of 'Thr-68' within the FHA domain of CHEK2. Interacts constitutively with the BRCA1-BARD1 complex, SMC1A and TP53BP1. Interacts with ATM and FANCD2, and these interactions are reduced upon DNA damage. Also interacts with the PRKDC complex, composed of XRCC6/KU70, XRCC5/KU80 and PRKDC/XRCC7. This interaction may be required for PRKDC autophosphorylation, which is essential for DNA double strand break (DSB) repair. When phosphorylated by ATM, interacts with RNF8 (via FHA domain). Interacts with CEP164. When phosphorylated, interacts with APTX (via FHA-like domain). Interacts (when phosphorylated) with TOPBP1; promoting TOPBP1 localization to DNA damage sites during mitosis. Interacts (when phosphorylated) with NBN; promoting NBN and MRN complex localization to DNA damage sites. Post-translationally, phosphorylated upon exposure to ionizing radiation (IR), ultraviolet radiation (UV), and hydroxyurea (HU). Phosphorylation in response to IR requires ATM, NBN, and possibly CHEK2. Also phosphorylated during the G2/M phase of the cell cycle and during activation of the mitotic spindle checkpoint. Phosphorylation at Thr-4 by ATM stabilizes and enhances homodimerization via the FHA domain. Phosphorylated at Ser-168 and Ser-198 by CK2 in response to DNA damage during mitosis, promoting interaction with TOPBP1. Phosphorylated by CK2 in response to DNA damage, promoting interaction with NBN and recruitment of the MRN complex to DNA damage sites. In terms of processing, sumoylation at Lys-1034 by PIAS4 following DNA damage promotes ubiquitin-mediated degradation. Ubiquitinated by RNF4, leading to proteasomal degradation; undergoes 'Lys-48'-linked polyubiquitination.

It localises to the nucleus. Its subcellular location is the chromosome. Functionally, histone reader protein required for checkpoint-mediated cell cycle arrest in response to DNA damage within both the S phase and G2/M phases of the cell cycle. Specifically recognizes and binds histone H2AX phosphorylated at 'Ser-139', a marker of DNA damage, serving as a scaffold for the recruitment of DNA repair and signal transduction proteins to discrete foci of DNA damage sites. Also required for downstream events subsequent to the recruitment of these proteins. These include phosphorylation and activation of the ATM, CHEK1 and CHEK2 kinases, and stabilization of TP53/p53 and apoptosis. ATM and CHEK2 may also be activated independently by a parallel pathway mediated by TP53BP1. Required for chromosomal stability during mitosis by promoting recruitment of TOPBP1 to DNA double strand breaks (DSBs): TOPBP1 forms filamentous assemblies that bridge MDC1 and tether broken chromosomes during mitosis. Required for the repair of DSBs via homologous recombination by promoting recruitment of NBN component of the MRN complex to DSBs. The sequence is that of Mediator of DNA damage checkpoint protein 1 (Mdc1) from Rattus norvegicus (Rat).